A 698-amino-acid polypeptide reads, in one-letter code: MLYIFNSFDNMWVDFIEQTKSFKVSVNNYFYYLNKIKKLFTYLNDLRKHILKKYVYTINHKRIAINYLYFSMVTGLSGAALATMIRMELAHPESPFFKGDSLRYLQVVTAHGLIMVFFVVVPILFGGFANFLIPYHVGSKDVAYPRLNSIGFWIQPCGYILLAKIGFLRPQFWRYYDKTSFSFPFLEKMKYNQYKEYKNDYLFYLDFLKKEITDDHSFFWKARKVIKLPQYSVFSFVPLKLMMWKTMINYPESFWYAASRVVQSRRKKVFVTKCSARTLTTAGWTFITPFSSNIKYTGVGSQDILILSVVFAGISTTISFTNLLITRRTLAMPGMRHRRVLMPFVTISIFLTLRMLATITPVLGAAVIMMAFDRHWQTTFFEYAYGGDPILSQHLFWFFGHPEVYVLIIPTFGFINMIVPHNNTRRVASKHHMIWAIYVMAYMGYLVWGHHMYLVGLDHRSRTMYSTITIMISMPATIKVVNWTLSLVNGALKVDLPFLFSMSFLLLFLVAGFTGMWLSHVSLNVSMHDTFYVVAHFHIMLSGAAITGIFSGFYYYFNALFGIKFSRMFGYMHLIYYSGGQWVAFVPQFYLGFSGMPRRIHDYPVVFMGWHSMSTAGHFITLIGIMFFFLMIFDSHIERRAATSSTLGLPRWYKRISYYIFKIRYLQHNKAKMNGIPGSTVRLMLIDRHFAEFEVFKK.

The helical transmembrane segment at 65-85 (INYLYFSMVTGLSGAALATMI) threads the bilayer. Glu-88 lines the Ca(2+) pocket. His-111 contacts Fe(II)-heme a. 8 helical membrane-spanning segments follow: residues 113–133 (LIMV…NFLI), 147–167 (LNSI…KIGF), 304–324 (ILIL…TNLL), 349–369 (IFLT…AVIM), 395–415 (LFWF…FGFI), 434–454 (IWAI…HMYL), 468–488 (ITIM…LSLV), and 498–518 (FLFS…GMWL). His-401 is a Cu cation binding site. A cross-link (1'-histidyl-3'-tyrosine (His-Tyr)) is located at residues 401–405 (HPEVY). Residue Tyr-405 coordinates O2. 2 residues coordinate Cu cation: His-450 and His-451. Mg(2+) is bound by residues His-528 and Asp-529. Transmembrane regions (helical) follow at residues 533–553 (VVAH…FSGF), 574–594 (LIYY…LGFS), and 613–633 (MSTA…LMIF). Residue His-536 participates in heme a3 binding. His-538 contributes to the Fe(II)-heme a binding site.

It belongs to the heme-copper respiratory oxidase family. As to quaternary structure, component of the cytochrome c oxidase (complex IV, CIV), a multisubunit enzyme composed of a catalytic core of 3 subunits and several supernumerary subunits. The complex exists as a monomer or a dimer and forms supercomplexes (SCs) in the inner mitochondrial membrane with ubiquinol-cytochrome c oxidoreductase (cytochrome b-c1 complex, complex III, CIII). It depends on heme as a cofactor. The cofactor is Cu cation.

It localises to the mitochondrion inner membrane. The enzyme catalyses 4 Fe(II)-[cytochrome c] + O2 + 8 H(+)(in) = 4 Fe(III)-[cytochrome c] + 2 H2O + 4 H(+)(out). It functions in the pathway energy metabolism; oxidative phosphorylation. Functionally, component of the cytochrome c oxidase, the last enzyme in the mitochondrial electron transport chain which drives oxidative phosphorylation. The respiratory chain contains 3 multisubunit complexes succinate dehydrogenase (complex II, CII), ubiquinol-cytochrome c oxidoreductase (cytochrome b-c1 complex, complex III, CIII) and cytochrome c oxidase (complex IV, CIV), that cooperate to transfer electrons derived from NADH and succinate to molecular oxygen, creating an electrochemical gradient over the inner membrane that drives transmembrane transport and the ATP synthase. Cytochrome c oxidase is the component of the respiratory chain that catalyzes the reduction of oxygen to water. Electrons originating from reduced cytochrome c in the intermembrane space (IMS) are transferred via the dinuclear copper A center (CU(A)) of subunit 2 and heme A of subunit 1 to the active site in subunit 1, a binuclear center (BNC) formed by heme A3 and copper B (CU(B)). The BNC reduces molecular oxygen to 2 water molecules using 4 electrons from cytochrome c in the IMS and 4 protons from the mitochondrial matrix. The chain is Cytochrome c oxidase subunit 1 (COI) from Tetrahymena pyriformis.